Consider the following 1150-residue polypeptide: Solute carrier family 12 member 6 (1150 aa).

At 1-135 the chain is on the cytoplasmic side; that stretch reads MHPPETTTKM…DEYFDKNLAL (135 aa). The segment at 20–66 is disordered; the sequence is TKIDDIPGLSDTSPDLSSRSSSRVRFSSRESVPETSRSEPMSEMSGA. Residues 28–45 show a composition bias toward low complexity; the sequence is LSDTSPDLSSRSSSRVRF. A phosphoserine mark is found at Ser32 and Ser120. Residues 136-158 traverse the membrane as a discontinuously helical segment; sequence FEEEMDTRPKVSSLLNRMANYTN. Ser147 and Ser148 together coordinate K(+). Ser148 is modified (phosphoserine). Asn151 provides a ligand contact to chloride. Topologically, residues 159–165 are extracellular; sequence LTQGAKE. Residues 161–181 are disordered; it reads QGAKEHEEAENITEGKKKPTK. Residues 163-177 are compositionally biased toward basic and acidic residues; the sequence is AKEHEEAENITEGKK. The helical transmembrane segment at 166–188 threads the bilayer; sequence HEEAENITEGKKKPTKTPQMGTF. Residues 189-211 are Cytoplasmic-facing; the sequence is MGVYLPCLQNIFGVILFLRLTWV. The helical transmembrane segment at 212–245 threads the bilayer; the sequence is VGTAGVLQAFAIVLICCCCTMLTAISMSAIATNG. Residues 246-263 lie on the Extracellular side of the membrane; sequence VVPAGGSYFMISRALGPE. Helical transmembrane passes span 264 to 287 and 288 to 316; these read FGGA…ILGA and IEIF…AMLN. Residues 317 to 433 lie on the Extracellular side of the membrane; it reads NMRVYGTAFL…FVHNNVTSIQ (117 aa). An intrachain disulfide couples Cys375 to Cys390. N-linked (GlcNAc...) asparagine glycosylation is found at Asn379, Asn398, Asn411, and Asn428. A disulfide bridge links Cys410 with Cys420. Residues 434–454 form a helical membrane-spanning segment; that stretch reads GIPGLASGIITENLWSNYLPK. Positions 443, 444, and 446 each coordinate K(+). Positions 443 and 444 each coordinate chloride. Residues Leu447 and Trp448 each coordinate chloride. At 455 to 464 the chain is on the cytoplasmic side; sequence GEIIEKPSAK. The chain crosses the membrane as a helical span at residues 465–487; that stretch reads SSDVLGSLNHEYVLVDITTSFTL. Residues 488–518 lie on the Extracellular side of the membrane; it reads LVGIFFPSVTGIMAGSNRSGDLKDAQKSIPI. A helical membrane pass occupies residues 519 to 545; sequence GTILAILTTSFVYLSNVVLFGACIEGV. The Cytoplasmic portion of the chain corresponds to 546–568; the sequence is VLRDKFGDAVKGNLVVGTLSWPS. 2 helical membrane-spanning segments follow: residues 569-589 and 590-612; these read PWVI…QSLT and GAPR…VFGH. Ile603 contacts chloride. Residues 613–629 lie on the Cytoplasmic side of the membrane; it reads SKANGEPTWALLLTAAI. 2 helical membrane-spanning segments follow: residues 630–649 and 650–665; these read AELG…LSMF and FLMC…ALQT. Residues 666–1150 are Cytoplasmic-facing; sequence LLRTPNWRPR…GGSEVITIYS (485 aa). The interval 682 to 691 is scissor helix; sequence ALSFMGMSIC. The residue at position 736 (Ser736) is a Phosphoserine. Position 778 is a phosphothreonine (Thr778). A Phosphoserine modification is found at Ser981. Thr991 carries the post-translational modification Phosphothreonine; by OXSR1 and STK39. Phosphoserine occurs at positions 1023, 1029, and 1032. Thr1048 carries the post-translational modification Phosphothreonine; by OXSR1 and STK39. Phosphotyrosine is present on Tyr1121. The interval 1133–1150 is interaction with CKB; it reads ERVLLVRGGGSEVITIYS.

This sequence belongs to the SLC12A transporter family. K/Cl co-transporter subfamily. As to quaternary structure, homodimer; adopts a domain-swap conformation at the scissor helices connecting the transmembrane domain and C-terminal domain. Heterodimer with K-Cl cotransporter SLC12A5. Interacts (via C-terminus) with CKB; the interaction may be required for potassium-chloride cotransport activity. Post-translationally, phosphorylated, phosphorylation regulates transporter activity. Phosphorylated at Thr-991 and Thr-1048 by OXSR1/OSR1 and STK39/SPAK downstream of WNK kinases (WNK1, WNK2, WNK3 or WNK4), inhibiting the potassium-chloride cotransport activity. N-glycosylated. As to expression, expressed in brain (at protein level). Highly expressed in heart, brain and kidney. Detected at lower levels in skeletal muscle, placenta, lung and pancreas. Detected in umbilical vein endothelial cells. In terms of tissue distribution, more abundant in kidney. Testis specific.

The protein localises to the cell membrane. The protein resides in the basolateral cell membrane. The catalysed reaction is K(+)(in) + chloride(in) = K(+)(out) + chloride(out). Inhibited following phosphorylation by OXSR1/OSR1 and STK39/SPAK: phosphorylation takes place downstream of WNK kinases (WNK1, WNK2, WNK3 or WNK4) in response to hyperosmotic stress and subsequent cell shrinkage. Activated by N-ethylmaleimide (NEM). Inhibited by DIOA, bumetanide and furosemide. Mediates electroneutral potassium-chloride cotransport when activated by cell swelling. May contribute to cell volume homeostasis in single cells. Functionally, mediates electroneutral potassium-chloride cotransport when activated by cell swelling. May contribute to cell volume homeostasis in single cells. Its function is as follows. Mediates electroneutral potassium-chloride cotransport when activated by cell swelling. May contribute to cell volume homeostasis in single cells. The sequence is that of Solute carrier family 12 member 6 from Homo sapiens (Human).